Consider the following 499-residue polypeptide: Centrosomal protein of 57 kDa (499 aa).

Over residues 1 to 35 the composition is skewed to polar residues; sequence MAAASVSETSASQFSNILAEPSKSNGSMVRHSSSP. The interval 1 to 58 is disordered; the sequence is MAAASVSETSASQFSNILAEPSKSNGSMVRHSSSPYVVYPPDKPFLNSDLRRSPNKPT. Ser53 is modified (phosphoserine). Positions 58–239 are centrosome localization domain (CLD); it reads TFAYPESNSR…KAAQLQTGLE (182 aa). Positions 63-241 form a coiled coil; the sequence is ESNSRAIFSA…AQLQTGLEVN (179 aa). A mediates interaction with microtubules region spans residues 277-490; that stretch reads AVQPHYRLCL…KDMQSIQNSL (214 aa). Disordered stretches follow at residues 334–357 and 431–476; these read KQVS…SVNE and KQKK…SRKN. Positions 346–357 are enriched in low complexity; sequence SATPPSSSSVNE. A coiled-coil region spans residues 389-450; that stretch reads TVELKDNLEC…KTLDEEGNSS (62 aa). Residues 431–444 are compositionally biased toward basic and acidic residues; that stretch reads KQKKELKATRKTLD. Residues 449–459 are compositionally biased toward low complexity; sequence SSSRSTTTGTT. Basic and acidic residues predominate over residues 460-474; that stretch reads NKKDFAKPRPGEKSR.

It belongs to the translokin family. In terms of assembly, homodimer and homooligomer. Interacts with FGF2 and RAP80. Does not interact with FGF1 or FGF2 isoform 24 kDa. Interacts with microtubules.

The protein resides in the nucleus. Its subcellular location is the cytoplasm. It localises to the cytoskeleton. It is found in the microtubule organizing center. The protein localises to the centrosome. In terms of biological role, centrosomal protein which may be required for microtubule attachment to centrosomes. May act by forming ring-like structures around microtubules. Mediates nuclear translocation and mitogenic activity of the internalized growth factor FGF2. The sequence is that of Centrosomal protein of 57 kDa (CEP57) from Bos taurus (Bovine).